We begin with the raw amino-acid sequence, 95 residues long: Envelope glycoprotein N (95 aa).

The signal sequence occupies residues 1 to 26; it reads MGLMDIHNAVCSLVIGVAILIATSQA. Residues 27–55 lie on the Virion surface side of the membrane; that stretch reads TFVDWGSSITSMGDFWESTCSAVGVSIAF. Residues 56-76 form a helical membrane-spanning segment; it reads SSGFSVLFYMGLVAVISALLA. Over 77–95 the chain is Intravirion; that stretch reads GSYHACFRLFTADMFKEEW.

It belongs to the herpesviridae glycoprotein N family. Interacts (via N-terminus) with gM (via N-terminus). The gM-gN heterodimer forms the gCII complex.

Its subcellular location is the virion membrane. It localises to the host membrane. The protein localises to the host Golgi apparatus. The protein resides in the host trans-Golgi network. Envelope glycoprotein necessary for proper maturation of gM and modulation of its membrane fusion activity. Also plays a critical role in virion morphogenesis. This is Envelope glycoprotein N from Gallus gallus (Chicken).